Here is a 286-residue protein sequence, read N- to C-terminus: ATP synthase gamma chain (286 aa).

Belongs to the ATPase gamma chain family. As to quaternary structure, F-type ATPases have 2 components, CF(1) - the catalytic core - and CF(0) - the membrane proton channel. CF(1) has five subunits: alpha(3), beta(3), gamma(1), delta(1), epsilon(1). CF(0) has three main subunits: a, b and c.

The protein localises to the cell inner membrane. Produces ATP from ADP in the presence of a proton gradient across the membrane. The gamma chain is believed to be important in regulating ATPase activity and the flow of protons through the CF(0) complex. This is ATP synthase gamma chain from Shewanella frigidimarina (strain NCIMB 400).